Consider the following 279-residue polypeptide: Gas vesicle protein L2 (279 aa).

The protein belongs to the gas vesicle GvpF/GvpL family. In terms of assembly, gvpF to GvpM interact with each other in vitro, and may form multi-subunit complex(es). Interacts with GvpC, GvpN and GvpO.

The protein resides in the gas vesicle. Functionally, proteins GvpF to GvpM might be involved in nucleating gas vesicle formation. A minor component of the gas vesicle. Gas vesicles are hollow, gas filled proteinaceous nanostructures found in several microbial planktonic microorganisms. They allow positioning of halobacteria at the optimal depth for growth in the poorly aerated, shallow brine pools of their habitat. In terms of biological role, expression of 2 c-vac DNA fragments containing 2 divergently transcribed regions (gvpE-gvpF-gvpG-gvpH-gvpI-gvpJ-gvpK-gvpL-gvpM and gvpA-gvpC-gvpN-gvpO) allows H.volcanii to produce gas vesicles. The polypeptide is Gas vesicle protein L2 (Halobacterium salinarum (strain ATCC 700922 / JCM 11081 / NRC-1) (Halobacterium halobium)).